The following is a 355-amino-acid chain: tRNA pseudouridine synthase D (355 aa).

The Nucleophile role is filled by aspartate 84. The 147-residue stretch at 160–306 folds into the TRUD domain; sequence GVPNYFGLQR…MAHERRILRL (147 aa).

It belongs to the pseudouridine synthase TruD family.

It catalyses the reaction uridine(13) in tRNA = pseudouridine(13) in tRNA. Functionally, responsible for synthesis of pseudouridine from uracil-13 in transfer RNAs. In Pseudomonas aeruginosa (strain ATCC 15692 / DSM 22644 / CIP 104116 / JCM 14847 / LMG 12228 / 1C / PRS 101 / PAO1), this protein is tRNA pseudouridine synthase D.